The sequence spans 360 residues: Ribosomal RNA large subunit methyltransferase M (360 aa).

Residues Ser-187, 220–223 (CPGG), Asp-239, Asp-259, and Asp-276 each bind S-adenosyl-L-methionine. The active-site Proton acceptor is Lys-305.

The protein belongs to the class I-like SAM-binding methyltransferase superfamily. RNA methyltransferase RlmE family. RlmM subfamily. In terms of assembly, monomer.

The protein resides in the cytoplasm. The enzyme catalyses cytidine(2498) in 23S rRNA + S-adenosyl-L-methionine = 2'-O-methylcytidine(2498) in 23S rRNA + S-adenosyl-L-homocysteine + H(+). Catalyzes the 2'-O-methylation at nucleotide C2498 in 23S rRNA. This chain is Ribosomal RNA large subunit methyltransferase M, found in Shewanella pealeana (strain ATCC 700345 / ANG-SQ1).